The sequence spans 233 residues: Purine nucleoside phosphorylase DeoD-type (233 aa).

A purine D-ribonucleoside is bound at residue His-4. Phosphate-binding positions include Gly-20, Arg-24, Arg-43, and 87–90 (RIGT). Residues 179 to 181 (EME) and 203 to 204 (SD) each bind a purine D-ribonucleoside. Catalysis depends on Asp-204, which acts as the Proton donor.

This sequence belongs to the PNP/UDP phosphorylase family. Homohexamer; trimer of homodimers.

It carries out the reaction a purine D-ribonucleoside + phosphate = a purine nucleobase + alpha-D-ribose 1-phosphate. The enzyme catalyses a purine 2'-deoxy-D-ribonucleoside + phosphate = a purine nucleobase + 2-deoxy-alpha-D-ribose 1-phosphate. In terms of biological role, catalyzes the reversible phosphorolytic breakdown of the N-glycosidic bond in the beta-(deoxy)ribonucleoside molecules, with the formation of the corresponding free purine bases and pentose-1-phosphate. This chain is Purine nucleoside phosphorylase DeoD-type, found in Helicobacter pylori (strain G27).